A 109-amino-acid polypeptide reads, in one-letter code: Spermidine export protein MdtI (109 aa).

4 helical membrane-spanning segments follow: residues 6 to 26, 36 to 56, 64 to 84, and 88 to 108; these read WVHAAWLAMAIVLEIVANVFL, FYGILSLAAVLAAFSALSQAV, AYALWGGFGIAATLAAGWVLF, and LNNKGWVGVVLLLIGMIMIKL.

Belongs to the drug/metabolite transporter (DMT) superfamily. Small multidrug resistance (SMR) (TC 2.A.7.1) family. MdtI subfamily. Forms a complex with MdtJ.

The protein resides in the cell inner membrane. Its function is as follows. Catalyzes the excretion of spermidine. This is Spermidine export protein MdtI from Citrobacter koseri (strain ATCC BAA-895 / CDC 4225-83 / SGSC4696).